The following is a 382-amino-acid chain: Mannitol-1-phosphate 5-dehydrogenase (382 aa).

4-15 (AVHFGAGNIGRG) is an NAD(+) binding site.

The protein belongs to the mannitol dehydrogenase family.

The catalysed reaction is D-mannitol 1-phosphate + NAD(+) = beta-D-fructose 6-phosphate + NADH + H(+). The sequence is that of Mannitol-1-phosphate 5-dehydrogenase from Vibrio vulnificus (strain YJ016).